A 430-amino-acid polypeptide reads, in one-letter code: Adenylosuccinate synthetase (430 aa).

GTP-binding positions include 12–18 (GDEGKGK) and 40–42 (GHT). The Proton acceptor role is filled by D13. D13 and G40 together coordinate Mg(2+). IMP is bound by residues 13 to 16 (DEGK), 38 to 41 (NAGH), T130, R144, Q224, T239, and R303. The Proton donor role is filled by H41. 299–305 (VNTGRKR) lines the substrate pocket. Residues R305, 331-333 (KLD), and 413-415 (STS) each bind GTP.

The protein belongs to the adenylosuccinate synthetase family. In terms of assembly, homodimer. The cofactor is Mg(2+).

It is found in the cytoplasm. The enzyme catalyses IMP + L-aspartate + GTP = N(6)-(1,2-dicarboxyethyl)-AMP + GDP + phosphate + 2 H(+). The protein operates within purine metabolism; AMP biosynthesis via de novo pathway; AMP from IMP: step 1/2. In terms of biological role, plays an important role in the de novo pathway of purine nucleotide biosynthesis. Catalyzes the first committed step in the biosynthesis of AMP from IMP. This chain is Adenylosuccinate synthetase, found in Rhodopseudomonas palustris (strain BisB18).